The following is a 990-amino-acid chain: Aminopeptidase Q (990 aa).

Residues 2-13 are Cytoplasmic-facing; the sequence is GPPSSSGFYVSR. The chain crosses the membrane as a helical; Signal-anchor for type II membrane protein span at residues 14-34; sequence AVALLLAGLVAALLLALAVLA. Residues 35-990 are Lumenal-facing; it reads ALYGHCERVP…RIAAWLRRNT (956 aa). The segment at 48-91 is disordered; sequence LPGLRDLEAESSPPLRQKPTPTPKPSSARELAVTTTPSNWRPPG. N132 and N168 each carry an N-linked (GlcNAc...) asparagine glycan. E240 provides a ligand contact to substrate. Residues N261, N288, N319, and N346 are each glycosylated (N-linked (GlcNAc...) asparagine). 379–383 provides a ligand contact to substrate; sequence HAMEN. Zn(2+) is bound at residue H415. The active-site Proton acceptor is the E416. Residues H419 and E438 each coordinate Zn(2+). The active-site Proton donor is the Y503. Residues N607 and N653 are each glycosylated (N-linked (GlcNAc...) asparagine).

This sequence belongs to the peptidase M1 family. In terms of assembly, homodimer. Requires Zn(2+) as cofactor. N-glycosylated. Specifically expressed in placenta and not in other tissues. Mainly found at the cell surface region of the extravillous trophoblasts. Detected on extravillous trophoblasts in the outer layer of the chorion laeve in the fetal membrane Not detected on either fetal amnionic epithelial cells or maternal decidual cells. Also detected in the migrating extravillous trophoblasts in the maternal decidual tissues (at protein level).

Its subcellular location is the membrane. With respect to regulation, inhibited by bestatin. Functionally, metalloprotease which may be important for placentation by regulating biological activity of key peptides at the embryo-maternal interface. On synthetic substrates it shows a marked preference for Leu-4-methylcoumaryl-7-amide (Leu-MCA) over Met-MCA, Arg-LCA and Lys-LCA. Cleaves the N-terminal amino acid of several peptides such as angiotensin-3, kisspeptin-10 and endokinin C. The chain is Aminopeptidase Q from Homo sapiens (Human).